The following is a 394-amino-acid chain: Acryloyl-CoA reductase (NADH) (394 aa).

Residues 135–144 (FALTEPNAGS) and 170–172 (FIS) contribute to the FAD site. S144 provides a ligand contact to substrate. 254-257 (DGAR) serves as a coordination point for substrate. FAD-binding positions include R282, Q293, and 350 to 354 (QIHGG). E377 serves as the catalytic Proton acceptor. G378 contacts substrate. Position 379 to 381 (379 to 381 (TSE)) interacts with FAD.

Heterohexadecamer; tetramer of tetramers. Each tetramer is composed of 2 alpha (AcrC), a beta (AcrA) and a gamma (AcrB) subunit. It depends on FAD as a cofactor.

Its subcellular location is the cytoplasm. It carries out the reaction propanoyl-CoA + NAD(+) = acryloyl-CoA + NADH + H(+). Its function is as follows. Probable catalytic subunit of the acryloyl-CoA reductase complex involved in the pathway of L-alanine fermentation. Catalyzes the irreversible NADH-dependent formation of propionyl-CoA from acryloyl-CoA. It can also use 3-buten-2-one as substrate. The sequence is that of Acryloyl-CoA reductase (NADH) (acrC) from Anaerotignum propionicum (Clostridium propionicum).